The primary structure comprises 208 residues: Uracil phosphoribosyltransferase (208 aa).

5-phospho-alpha-D-ribose 1-diphosphate is bound by residues arginine 78, arginine 103, and 130–138 (DPMLATGGS). Uracil contacts are provided by residues isoleucine 193 and 198-200 (GDA). Aspartate 199 serves as a coordination point for 5-phospho-alpha-D-ribose 1-diphosphate.

Belongs to the UPRTase family. Requires Mg(2+) as cofactor.

The catalysed reaction is UMP + diphosphate = 5-phospho-alpha-D-ribose 1-diphosphate + uracil. It functions in the pathway pyrimidine metabolism; UMP biosynthesis via salvage pathway; UMP from uracil: step 1/1. Allosterically activated by GTP. Its function is as follows. Catalyzes the conversion of uracil and 5-phospho-alpha-D-ribose 1-diphosphate (PRPP) to UMP and diphosphate. This is Uracil phosphoribosyltransferase from Neisseria meningitidis serogroup C (strain 053442).